Reading from the N-terminus, the 596-residue chain is Phosphoenolpyruvate carboxykinase [GTP] (596 aa).

Substrate is bound by residues arginine 77 and 205 to 207; that span reads YGG. Mn(2+) contacts are provided by lysine 214 and histidine 234. Residue serine 256 coordinates substrate. A GTP-binding site is contributed by 257-262; that stretch reads ACGKTN. Residue cysteine 258 is part of the active site. Aspartate 283 provides a ligand contact to Mn(2+). The interval 362 to 388 is disordered; the sequence is KKGSTEKAAHPNSRFTAPAKNNPAISP. Substrate is bound at residue 373–375; the sequence is NSR. Residues arginine 375, arginine 406, and 499–502 each bind GTP; that span reads YGDN.

It belongs to the phosphoenolpyruvate carboxykinase [GTP] family. As to quaternary structure, monomer. The cofactor is Mn(2+).

It localises to the cytoplasm. The catalysed reaction is oxaloacetate + GTP = phosphoenolpyruvate + GDP + CO2. The protein operates within carbohydrate biosynthesis; gluconeogenesis. Its function is as follows. Catalyzes the conversion of oxaloacetate (OAA) to phosphoenolpyruvate (PEP), the rate-limiting step in the metabolic pathway that produces glucose from lactate and other precursors derived from the citric acid cycle. The sequence is that of Phosphoenolpyruvate carboxykinase [GTP] from Anaeromyxobacter dehalogenans (strain 2CP-1 / ATCC BAA-258).